A 349-amino-acid polypeptide reads, in one-letter code: Anthranilate phosphoribosyltransferase (349 aa).

Residues Gly82, 85–86 (GD), 92–95 (NVST), 110–118 (KHGNRGVSS), and Ser122 contribute to the 5-phospho-alpha-D-ribose 1-diphosphate site. Gly82 contributes to the anthranilate binding site. A Mg(2+)-binding site is contributed by Ser94. Position 113 (Asn113) interacts with anthranilate. Anthranilate is bound at residue Arg168. 2 residues coordinate Mg(2+): Asp227 and Glu228.

It belongs to the anthranilate phosphoribosyltransferase family. As to quaternary structure, homodimer. Mg(2+) serves as cofactor.

The catalysed reaction is N-(5-phospho-beta-D-ribosyl)anthranilate + diphosphate = 5-phospho-alpha-D-ribose 1-diphosphate + anthranilate. It functions in the pathway amino-acid biosynthesis; L-tryptophan biosynthesis; L-tryptophan from chorismate: step 2/5. Functionally, catalyzes the transfer of the phosphoribosyl group of 5-phosphorylribose-1-pyrophosphate (PRPP) to anthranilate to yield N-(5'-phosphoribosyl)-anthranilate (PRA). This Acinetobacter baumannii (strain SDF) protein is Anthranilate phosphoribosyltransferase.